The following is a 140-amino-acid chain: uncharacterized protein (140 aa).

Over residues 1–15 (MQRQTGHMEDKKRTG) the composition is skewed to basic and acidic residues. Residues 1–34 (MQRQTGHMEDKKRTGLESQGTENAFSDGRDGKDG) are disordered.

This is an uncharacterized protein from Gallus gallus (Chicken).